A 488-amino-acid polypeptide reads, in one-letter code: Cobyric acid synthase (488 aa).

Positions 248 to 435 constitute a GATase cobBQ-type domain; sequence VLKVVVPVLP…LHGLFESPAA (188 aa). Catalysis depends on C329, which acts as the Nucleophile. The active site involves H427.

It belongs to the CobB/CobQ family. CobQ subfamily.

The protein operates within cofactor biosynthesis; adenosylcobalamin biosynthesis. Catalyzes amidations at positions B, D, E, and G on adenosylcobyrinic A,C-diamide. NH(2) groups are provided by glutamine, and one molecule of ATP is hydrogenolyzed for each amidation. The protein is Cobyric acid synthase of Pseudomonas fluorescens (strain Pf0-1).